Reading from the N-terminus, the 507-residue chain is Probable allantoinase (507 aa).

Zn(2+) is bound by residues His105, His107, Lys195, His231, His294, and Asp368. At Lys195 the chain carries N6-carboxylysine.

Belongs to the metallo-dependent hydrolases superfamily. Allantoinase family. In terms of assembly, homotetramer. Zn(2+) serves as cofactor. Post-translationally, carboxylation allows a single lysine to coordinate two zinc ions.

The enzyme catalyses (S)-allantoin + H2O = allantoate + H(+). It participates in nitrogen metabolism; (S)-allantoin degradation; allantoate from (S)-allantoin: step 1/1. Its function is as follows. Catalyzes the conversion of allantoin (5-ureidohydantoin) to allantoate by hydrolytic cleavage of the five-member hydantoin ring. Catalyzes the first step of the ureide allantoin degradation followed by the sequential activity of AAH, UGLYAH and UAH which allows a complete purine breakdown without the intermediate generation of urea. This is Probable allantoinase (ALN) from Oryza sativa subsp. japonica (Rice).